The primary structure comprises 302 residues: Nucleotide-binding protein Bmul_0520/BMULJ_02739 (302 aa).

8-15 (GISGSGKS) serves as a coordination point for ATP. 57 to 60 (DARS) provides a ligand contact to GTP.

This sequence belongs to the RapZ-like family.

Displays ATPase and GTPase activities. The sequence is that of Nucleotide-binding protein Bmul_0520/BMULJ_02739 from Burkholderia multivorans (strain ATCC 17616 / 249).